The sequence spans 130 residues: Large ribosomal subunit protein bL21 (130 aa).

The interval 103–130 is disordered; the sequence is AGGKTSKAEPRKTRKAEPAAESAPAAAE. The span at 108–120 shows a compositional bias: basic and acidic residues; the sequence is SKAEPRKTRKAEP. A compositionally biased stretch (low complexity) spans 121–130; that stretch reads AAESAPAAAE.

It belongs to the bacterial ribosomal protein bL21 family. In terms of assembly, part of the 50S ribosomal subunit. Contacts protein L20.

In terms of biological role, this protein binds to 23S rRNA in the presence of protein L20. The protein is Large ribosomal subunit protein bL21 of Methylorubrum extorquens (strain CM4 / NCIMB 13688) (Methylobacterium extorquens).